Here is an 858-residue protein sequence, read N- to C-terminus: DNA mismatch repair protein MutS (858 aa).

613-620 (GPNMAGKS) contacts ATP.

Belongs to the DNA mismatch repair MutS family.

Its function is as follows. This protein is involved in the repair of mismatches in DNA. It is possible that it carries out the mismatch recognition step. This protein has a weak ATPase activity. In Dehalococcoides mccartyi (strain ATCC BAA-2100 / JCM 16839 / KCTC 5957 / BAV1), this protein is DNA mismatch repair protein MutS.